We begin with the raw amino-acid sequence, 300 residues long: UPF0761 membrane protein PSHAa0171 (300 aa).

A run of 6 helical transmembrane segments spans residues 47–67 (LLSL…FPGF), 100–120 (NANQ…LLLI), 143–163 (FAVY…SIAV), 181–201 (FSGF…FIML), 215–235 (AIPG…GFAL), and 249–269 (AVAT…VVLL).

It belongs to the UPF0761 family.

The protein localises to the cell inner membrane. This Pseudoalteromonas translucida (strain TAC 125) protein is UPF0761 membrane protein PSHAa0171.